The following is a 125-amino-acid chain: Large ribosomal subunit protein bL12 (125 aa).

This sequence belongs to the bacterial ribosomal protein bL12 family. In terms of assembly, homodimer. Part of the ribosomal stalk of the 50S ribosomal subunit. Forms a multimeric L10(L12)X complex, where L10 forms an elongated spine to which 2 to 4 L12 dimers bind in a sequential fashion. Binds GTP-bound translation factors.

Functionally, forms part of the ribosomal stalk which helps the ribosome interact with GTP-bound translation factors. Is thus essential for accurate translation. This chain is Large ribosomal subunit protein bL12, found in Campylobacter jejuni subsp. jejuni serotype O:2 (strain ATCC 700819 / NCTC 11168).